The chain runs to 293 residues: MSSSITPSLIAADLFSVDRLVAVVTGGATGIGLMIVKALEENGAKVYIIGRRKEVLDKVAKEEAKHGNIIPLQGDASSKPDLERIVAHITKETGYINLLVANAGISGPDPVRITPSTTLSELQRDLWSLDPSIFAQTFSVNVGTAYFSIAAFLPLLDAGNHKGNVVQSSQAIITSSIGAFGRVPLAHYAYSASKAAVTHMTKQFATALTKYKIRFNILAPGLYPSEMTAGIVKSFEQLSPEERATRVSPLGREGNTEDMAGCILWLASKAGAWLSGNVVVSDGGKLSVTPSSY.

NADP(+)-binding residues include I31 and N102. The active-site Proton donor is the S175. Positions 190, 194, and 225 each coordinate NADP(+). Catalysis depends on Y190, which acts as the Proton acceptor. Catalysis depends on K194, which acts as the Lowers pKa of active site Tyr.

It belongs to the short-chain dehydrogenases/reductases (SDR) family.

Its function is as follows. Short-chain dehydrogenase/reductase; part of the gene cluster that mediates the biosynthesis of the phomopsins, a group of hexapeptide mycotoxins which infects lupins and causes lupinosis disease in livestock. The role of phomF' within the phomopsins biosynthesis pathway has still to be determined. The pathway starts with the processing of the precursor phomA by several endopeptidases including kexin proteases as well as the cluster-specific S41 family peptidase phomP1 and the oligopeptidase phomG to produce 10 identical copies of the hexapeptide Tyr-Val-Ile-Pro-Ile-Asp. After being excised from the precursor peptide, the core peptides are cyclized and modified post-translationally by enzymes encoded within the gene cluster. The timing and order of proteolysis of the phomA precursor and PTMs are still unknown. Two tyrosinase-like enzymes, phomQ1 and phomQ2, catalyze the chlorination and hydroxylation of Tyr, respectively. PhomYb, is proposed to be involved in the construction of the macrocyclic structure. The other 4 ustYa family proteins may be involved in PTMs that generate the unique structure of phomopsin A. PhomYa is required for the hydroxylation of C-beta of Tyr. PhomYc, phomYd, and phomYe are responsible for the biosynthesis of 2,3-dehydroisoleucine (dIle), 2,3-dehydroaspartic acid (dAsp), and 3,4-dehydroproline (dPro), respectively. While dIle formation by phomYc is indispensable for the installation of dAsp by phomYd, the order of the other PTMs have not been elucidated yet. Most of the biosynthetic enzymes likely have broad substrate specificity, and thus, there might be a metabolic grid from a precursor to phomopsin A. The enzyme(s) responsible for the biosynthesis of 3,4-dehydrovaline (dVal) have also not been identified yet. Finally, phomM acts as an S-adenosylmethionine-dependent alpha-N-methyltransferase that catalyzes two successive N-methylation reactions, converting N-desmethyl-phomopsin A to phomopsin A and phomopsin A further to an N,N-dimethylated congener called phomopsin E. This chain is Short-chain dehydrogenase/reductase PhomF', found in Diaporthe leptostromiformis (Lupinosis disease fungus).